A 660-amino-acid polypeptide reads, in one-letter code: UvrABC system protein B (660 aa).

The region spanning 24–177 is the Helicase ATP-binding domain; sequence KGFKEGNQFE…DDLARALIDL (154 aa). 37 to 44 contacts ATP; sequence GVTGSGKT. The Beta-hairpin signature appears at 90–113; that stretch reads YYDYYQPEAYVPQSDTYIAKDSSV. The 167-residue stretch at 428–594 folds into the Helicase C-terminal domain; the sequence is QIDDLVSEVN…TIQKSVRDLI (167 aa). One can recognise a UVR domain in the interval 620-655; it reads EKHIADIEKKMKKAAAELNFEAAAEYRDKLIMLKNT.

Belongs to the UvrB family. In terms of assembly, forms a heterotetramer with UvrA during the search for lesions. Interacts with UvrC in an incision complex.

It localises to the cytoplasm. Its function is as follows. The UvrABC repair system catalyzes the recognition and processing of DNA lesions. A damage recognition complex composed of 2 UvrA and 2 UvrB subunits scans DNA for abnormalities. Upon binding of the UvrA(2)B(2) complex to a putative damaged site, the DNA wraps around one UvrB monomer. DNA wrap is dependent on ATP binding by UvrB and probably causes local melting of the DNA helix, facilitating insertion of UvrB beta-hairpin between the DNA strands. Then UvrB probes one DNA strand for the presence of a lesion. If a lesion is found the UvrA subunits dissociate and the UvrB-DNA preincision complex is formed. This complex is subsequently bound by UvrC and the second UvrB is released. If no lesion is found, the DNA wraps around the other UvrB subunit that will check the other stand for damage. The sequence is that of UvrABC system protein B from Agathobacter rectalis (strain ATCC 33656 / DSM 3377 / JCM 17463 / KCTC 5835 / VPI 0990) (Eubacterium rectale).